A 169-amino-acid polypeptide reads, in one-letter code: MATQTSNPQSVYDFTVKDAKGKDVDLSIYKGKVLIIVNVASQCGLTNSNYTDMTELYKKYKDQGLEILAFPCNQFGGQEPGNIEDIQQMVCTRFKAEYPIFDKVDVNGDNAAPLYRFLKSSKGGFFGDGIKWNFSKFLIDKEGHVVDRYSPTTSPASMEKDIKKLLGVA.

Cys-43 is a catalytic residue.

Belongs to the glutathione peroxidase family. In terms of assembly, monomer. Has a tendency to form higher mass oligomers. Interacts with FUNDC1; this interaction promotes GPX4 recruitment into mitochondria through TOM/TIM complex where it is degraded by mitophagy.

It is found in the cytoplasm. The enzyme catalyses a hydroperoxy polyunsaturated fatty acid + 2 glutathione = a hydroxy polyunsaturated fatty acid + glutathione disulfide + H2O. In terms of biological role, protects cells and enzymes from oxidative damage, by catalyzing the reduction of hydrogen peroxide, lipid peroxides and organic hydroperoxide, by glutathione. The polypeptide is Probable phospholipid hydroperoxide glutathione peroxidase (GPXle-1) (Solanum lycopersicum (Tomato)).